Here is a 327-residue protein sequence, read N- to C-terminus: MAMTAEVKDELSRLVVNSVSARRAEVASLLRFAGGLHIVSGRVVVEAEVDLGIIARRLRKDIYDLYGYSAVVHVLSASGIRKSTRYVVRVAKDGEALARQTGLLDLRGRPVRGLPAQVVGGSVADAEAAWRGAFLAHGSLTEPGRSSALEVSCPGPEAALALVGAARRLGVSAKAREVRGSDRVVVRDGEAIGALLTRMGAQDTRLTWEERRMRREVRATANRLANFDDANLRRSARAAVAAAARVERALEILGDTVPDHLAAAGTLRVAHRQASLEELGRLADPPMTKDAVAGRIRRLLSMADRKAKQDGIPDTESAVTPDLLEDA.

The H-T-H motif DNA-binding region spans 275 to 308; sequence SLEELGRLADPPMTKDAVAGRIRRLLSMADRKAK. Residues 304–327 form a disordered region; the sequence is DRKAKQDGIPDTESAVTPDLLEDA.

The protein belongs to the WhiA family.

Its function is as follows. Involved in cell division and chromosome segregation. The chain is Probable cell division protein WhiA from Mycolicibacterium gilvum (strain PYR-GCK) (Mycobacterium gilvum (strain PYR-GCK)).